The primary structure comprises 151 residues: 3-hydroxyacyl-[acyl-carrier-protein] dehydratase FabZ (151 aa).

Residue histidine 54 is part of the active site.

This sequence belongs to the thioester dehydratase family. FabZ subfamily.

Its subcellular location is the cytoplasm. The catalysed reaction is a (3R)-hydroxyacyl-[ACP] = a (2E)-enoyl-[ACP] + H2O. In terms of biological role, involved in unsaturated fatty acids biosynthesis. Catalyzes the dehydration of short chain beta-hydroxyacyl-ACPs and long chain saturated and unsaturated beta-hydroxyacyl-ACPs. This Klebsiella pneumoniae (strain 342) protein is 3-hydroxyacyl-[acyl-carrier-protein] dehydratase FabZ.